We begin with the raw amino-acid sequence, 124 residues long: MADLNKLAEDIVGLTLLEAQELKTILKDKYGIEPAAGGAVMVAGPAAAAAPAEEEKTEFDVVLTDAGANKINVIKEVRAITGLGLKEAKDLVEAGGKVKEAASKADAEAMKKKLEEAGAKVELK.

This sequence belongs to the bacterial ribosomal protein bL12 family. In terms of assembly, homodimer. Part of the ribosomal stalk of the 50S ribosomal subunit. Forms a multimeric L10(L12)X complex, where L10 forms an elongated spine to which 2 to 4 L12 dimers bind in a sequential fashion. Binds GTP-bound translation factors.

Functionally, forms part of the ribosomal stalk which helps the ribosome interact with GTP-bound translation factors. Is thus essential for accurate translation. The chain is Large ribosomal subunit protein bL12 from Cereibacter sphaeroides (strain ATCC 17025 / ATH 2.4.3) (Rhodobacter sphaeroides).